Consider the following 625-residue polypeptide: tRNA uridine 5-carboxymethylaminomethyl modification enzyme MnmG (625 aa).

14 to 19 contributes to the FAD binding site; it reads GAGHAG. NAD(+) is bound at residue 273 to 287; sequence GPRYCPSIEDKIVRF.

It belongs to the MnmG family. In terms of assembly, homodimer. Heterotetramer of two MnmE and two MnmG subunits. The cofactor is FAD.

The protein localises to the cytoplasm. Functionally, NAD-binding protein involved in the addition of a carboxymethylaminomethyl (cmnm) group at the wobble position (U34) of certain tRNAs, forming tRNA-cmnm(5)s(2)U34. In Clostridium botulinum (strain Okra / Type B1), this protein is tRNA uridine 5-carboxymethylaminomethyl modification enzyme MnmG.